The sequence spans 96 residues: uncharacterized protein (96 aa).

Residues 1-30 (MLILSVFCAVFYAFLTAIVANFSLKTLAIG) form the signal peptide. Topologically, residues 31–54 (ATFVKSHLKSNPIPYGDLVADSLD) are extracellular. The helical transmembrane segment at 55–75 (FGNITPTVTLLFAILIAVLAL) threads the bilayer. The Cytoplasmic segment spans residues 76–96 (KCEFSCSTSAPAGQASGRKVK).

It localises to the membrane. This is an uncharacterized protein from Dictyostelium discoideum (Social amoeba).